We begin with the raw amino-acid sequence, 381 residues long: Carboxylesterase 5A (381 aa).

Catalysis depends on S108, which acts as the Acyl-ester intermediate. Residues C162 and C173 are joined by a disulfide bond. N-linked (GlcNAc...) asparagine glycosylation is present at N163. Residue E227 is the Charge relay system of the active site. N245 is a glycosylation site (N-linked (GlcNAc...) asparagine). H336 (charge relay system) is an active-site residue.

This sequence belongs to the type-B carboxylesterase/lipase family. As to quaternary structure, component of a epididymal complex at least composed of soluble form of prion protein PRNP, CLU, BPI, CES5A, MANBA and GLB1. Post-translationally, N-glycosylated. Detected in corpus and cauda epididymal fluid. Present in seminal fluid but not found to be associated with sperm (at protein level). Not expressed in other tissues.

The protein resides in the secreted. It carries out the reaction a carboxylic ester + H2O = an alcohol + a carboxylate + H(+). Involved in the detoxification of xenobiotics and in the activation of ester and amide prodrugs. This Ovis aries (Sheep) protein is Carboxylesterase 5A (CES5A).